Here is a 72-residue protein sequence, read N- to C-terminus: Brevinin-2GHb (72 aa).

The signal sequence occupies residues 1–22 (MFTMKKSLLLLFFLGTVSLSLC). The propeptide occupies 23–42 (EQERGADEDDGGEMTEELKR). Residues Cys66 and Cys72 are joined by a disulfide bond.

Expressed by the skin glands.

The protein localises to the secreted. In terms of biological role, antimicrobial peptide. Active against the Gram-positive bacteria S.aureus FDA209P (MIC=16.5 ug/ml) and B.subtilis ATCC 6633 (MIC&gt;64 ug/ml), and the Gram-negative bacteria E.coli O111 (MIC=8.2 ug/ml) and E.coli ATCC 25922 (MIC=8.2 ug/ml). Not active against the fungus C.albicans. The protein is Brevinin-2GHb of Sylvirana guentheri (Gunther's frog).